The following is a 2254-amino-acid chain: Acetyl-CoA carboxylase 1 (2254 aa).

Residues 36 to 543 form the Biotin carboxylation domain; that stretch reads PIHSILIANN…HTGWLDSRIA (508 aa). In terms of domain architecture, ATP-grasp spans 189–381; it reads NSNLVTIPEE…LPAAQVAVGM (193 aa). 215 to 272 is an ATP binding site; the sequence is CQVVGYPAMIKASWGGGGKGIRKVHNDDEVRALFKQVQGEVPGSPIFIMKVASQSRHL. 3 residues coordinate Mg(2+): Glu338, Glu352, and Asn354. Positions 338, 352, and 354 each coordinate Mn(2+). The active site involves Arg356. The region spanning 670–744 is the Biotinyl-binding domain; the sequence is LQNDHDPSKL…QAGELIANLD (75 aa). Lys711 bears the N6-biotinyllysine mark. Thr1031 carries the post-translational modification Phosphothreonine. Position 1192 is a phosphoserine (Ser1192). Residues 1492 to 1831 form the CoA carboxyltransferase N-terminal domain; that stretch reads QYKPLGYLDR…YVGGPLPVLA (340 aa). The interval 1492–2150 is carboxyltransferase; sequence QYKPLGYLDR…ESSLVKNVRE (659 aa). Positions 1740, 2041, and 2043 each coordinate CoA. The CoA carboxyltransferase C-terminal domain maps to 1835–2150; sequence PPERIVEYVP…ESSLVKNVRE (316 aa).

Homodimer. The cofactor is biotin. Mg(2+) serves as cofactor. Mn(2+) is required as a cofactor. As to expression, expressed in roots, trichomes, epidermal leaf cells, siliques, petals, anthers, and seeds.

The protein resides in the cytoplasm. It is found in the cytosol. It carries out the reaction hydrogencarbonate + acetyl-CoA + ATP = malonyl-CoA + ADP + phosphate + H(+). The catalysed reaction is N(6)-biotinyl-L-lysyl-[protein] + hydrogencarbonate + ATP = N(6)-carboxybiotinyl-L-lysyl-[protein] + ADP + phosphate + H(+). The protein operates within lipid metabolism; malonyl-CoA biosynthesis; malonyl-CoA from acetyl-CoA: step 1/1. Its function is as follows. Multifunctional enzyme that catalyzes the carboxylation of acetyl-CoA, forming malonyl-CoA, which is used in the plastid for fatty acid synthesis and in the cytosol in various biosynthetic pathways including fatty acid elongation. Required for very long chain fatty acids elongation. Necessary for embryo and plant development. Plays a central function in embryo morphogenesis, especially in apical meristem development. Involved in cell proliferation and tissue patterning. May act as a repressor of cytokinin response. In Arabidopsis thaliana (Mouse-ear cress), this protein is Acetyl-CoA carboxylase 1 (ACC1).